Here is a 230-residue protein sequence, read N- to C-terminus: Methyltransferase aurB (230 aa).

The protein belongs to the methyltransferase superfamily.

Its pathway is polyketide biosynthesis. Functionally, methyltransferase; part of the gene cluster that mediates the biosynthesis of aurovertins, fungal polyketides that exhibit potent inhibition of adenosine triphosphate synthase. Tha biosynthesis starts with the HR-PKS aurA that selects propionate as the starter unit; synthesizes a hexa-ene chain through the repeated functions of the KR and DH domains in the first six iterations; selectively introduces three alpha-methyl substitutions at C4, C6, and C16 using the S-adensylmethionine-dependent cMET; and shuts off KR and DH in the last three iterations to afford a 1,3,5-triketo portion that can undergo intramolecular cyclization to yield the alpha-pyrone intermediate. AurE may act as a cyclase and enhances the rate of pyrone formation and product release of aurA. The methyltransferase aurB then methylates the C17 hydroxyl group. C17 methylation is required to initiate epoxidation by the downstream monooxygenase aurC. The monooxygenase aurC and the epoxide hydrolase aurD can iteratively transform the terminal triene portion of the methylated precursor into the dioxabicyclo[3.2.1]octane scaffold of aurovertin E. Epoxidation modifications of the precursor occur in two separate steps; bis-epoxidation of the two terminal olefins takes place first, followed by another epoxidation that occurs at C7-C8 after tetrahydrofuran formation. The O-acyltransferase aurG converts aurovertin E to aurovertin A. The sequence is that of Methyltransferase aurB from Calcarisporium arbuscula (Dendryphion arbuscula).